Consider the following 197-residue polypeptide: Inosine triphosphate pyrophosphatase (197 aa).

10 to 15 (TGNANK) lines the ITP pocket. Residue glutamate 45 coordinates Mg(2+). ITP is bound by residues lysine 58, 76–77 (DT), lysine 93, 151–154 (FGWD), lysine 175, and 180–181 (HR).

It belongs to the HAM1 NTPase family. As to quaternary structure, homodimer. The cofactor is Mg(2+). It depends on Mn(2+) as a cofactor.

It localises to the cytoplasm. Its subcellular location is the nucleus. The catalysed reaction is ITP + H2O = IMP + diphosphate + H(+). It catalyses the reaction dITP + H2O = dIMP + diphosphate + H(+). It carries out the reaction XTP + H2O = XMP + diphosphate + H(+). The enzyme catalyses N(6)-hydroxy-dATP + H2O = N(6)-hydroxy-dAMP + diphosphate + H(+). Pyrophosphatase that hydrolyzes the non-canonical purine nucleotides inosine triphosphate (ITP), deoxyinosine triphosphate (dITP) as well as 2'-deoxy-N-6-hydroxylaminopurine triphosphate (dHAPTP) and 5-bromodeoxyuridine 5'-triphosphate (BrdUTP) to their respective monophosphate derivatives. Xanthosine 5'-triphosphate (XTP) is also a potential substrate. The enzyme does not distinguish between the deoxy- and ribose forms. Probably excludes non-canonical purines from RNA and DNA precursor pools, thus preventing their incorporation into RNA and DNA and avoiding chromosomal lesions. This chain is Inosine triphosphate pyrophosphatase, found in Saccharomyces cerevisiae (strain ATCC 204508 / S288c) (Baker's yeast).